Here is a 436-residue protein sequence, read N- to C-terminus: Tol-Pal system protein TolB (436 aa).

Residues 1 to 28 form the signal peptide; it reads MEMLRRNFFRLLMVLVAGCGLIASPANA.

It belongs to the TolB family. The Tol-Pal system is composed of five core proteins: the inner membrane proteins TolA, TolQ and TolR, the periplasmic protein TolB and the outer membrane protein Pal. They form a network linking the inner and outer membranes and the peptidoglycan layer.

Its subcellular location is the periplasm. Part of the Tol-Pal system, which plays a role in outer membrane invagination during cell division and is important for maintaining outer membrane integrity. This is Tol-Pal system protein TolB from Rhizobium meliloti (strain 1021) (Ensifer meliloti).